Reading from the N-terminus, the 330-residue chain is Flotillin-like protein FloA (330 aa).

Helical transmembrane passes span 5–25 (IILPIIIIAAVLIALAILFTF) and 28–48 (VALWISALAAGVKISIFTLIG).

The protein belongs to the flotillin-like FloA family. Homooligomerizes.

It localises to the cell membrane. It is found in the membrane raft. Functionally, found in functional membrane microdomains (FMM) that may be equivalent to eukaryotic membrane rafts. FMMs are highly dynamic and increase in number as cells age. Flotillins are thought to be important factors in membrane fluidity. This is Flotillin-like protein FloA from Oceanobacillus iheyensis (strain DSM 14371 / CIP 107618 / JCM 11309 / KCTC 3954 / HTE831).